A 191-amino-acid chain; its full sequence is Sporulation-specific protein (191 aa).

Not essential for sporulation. This chain is Sporulation-specific protein (SPR6), found in Saccharomyces cerevisiae (strain ATCC 204508 / S288c) (Baker's yeast).